A 379-amino-acid polypeptide reads, in one-letter code: Chaperone protein DnaJ (379 aa).

Residues 5–69 form the J domain; that stretch reads DYYEVLGISK…NKRASYDQFG (65 aa). The CR-type zinc-finger motif lies at 136–218; that stretch reads GTTKEISIRK…CHGKGTENKT (83 aa). Zn(2+) contacts are provided by cysteine 149, cysteine 152, cysteine 166, cysteine 169, cysteine 192, cysteine 195, cysteine 206, and cysteine 209. 4 CXXCXGXG motif repeats span residues 149-156, 166-173, 192-199, and 206-213; these read CETCHGDG, CSYCNGAG, CPKCNGSG, and CPTCHGKG.

The protein belongs to the DnaJ family. Homodimer. The cofactor is Zn(2+).

The protein resides in the cytoplasm. In terms of biological role, participates actively in the response to hyperosmotic and heat shock by preventing the aggregation of stress-denatured proteins and by disaggregating proteins, also in an autonomous, DnaK-independent fashion. Unfolded proteins bind initially to DnaJ; upon interaction with the DnaJ-bound protein, DnaK hydrolyzes its bound ATP, resulting in the formation of a stable complex. GrpE releases ADP from DnaK; ATP binding to DnaK triggers the release of the substrate protein, thus completing the reaction cycle. Several rounds of ATP-dependent interactions between DnaJ, DnaK and GrpE are required for fully efficient folding. Also involved, together with DnaK and GrpE, in the DNA replication of plasmids through activation of initiation proteins. The sequence is that of Chaperone protein DnaJ from Staphylococcus aureus (strain USA300 / TCH1516).